An 87-amino-acid polypeptide reads, in one-letter code: MKTLLLTLVVVTIVCLDLGYTKTCLISPSSTPQTCPQGQDTCFLKALCDKLCPIRGPVIEQGCAATCPEFRSNYRSLLCCTTDNCNH.

Residues 1 to 21 form the signal peptide; the sequence is MKTLLLTLVVVTIVCLDLGYT. 5 cysteine pairs are disulfide-bonded: C24–C42, C35–C63, C48–C52, C67–C79, and C80–C85.

Belongs to the three-finger toxin family. Long-chain subfamily. Kappa-neurotoxin sub-subfamily. As to quaternary structure, homo- and heterodimer; non-covalently linked. Expressed by the venom gland.

Its subcellular location is the secreted. Its function is as follows. Postsynaptic neurotoxin that binds and inhibits neuronal nicotinic acetylcholine receptors (nAChR) with high affinity (IC(50)&lt;100 nM). Is a selective, and slowly reversible antagonist of alpha-3/CHRNA3-containing and some alpha-4/CHRNA4-containing AChRs. The chain is Kappa-5-bungarotoxin from Bungarus multicinctus (Many-banded krait).